The chain runs to 152 residues: Methylglyoxal synthase (152 aa).

Residues 6–152 (RTIPAQKHIA…YQRYLQDRLK (147 aa)) enclose the MGS-like domain. Substrate is bound by residues H19, K23, 45-48 (TGTT), and 65-66 (SG). The active-site Proton donor/acceptor is the D71. H98 provides a ligand contact to substrate.

It belongs to the methylglyoxal synthase family.

It carries out the reaction dihydroxyacetone phosphate = methylglyoxal + phosphate. Catalyzes the formation of methylglyoxal from dihydroxyacetone phosphate. The polypeptide is Methylglyoxal synthase (Pectobacterium atrosepticum (strain SCRI 1043 / ATCC BAA-672) (Erwinia carotovora subsp. atroseptica)).